The sequence spans 571 residues: Putative pyruvate decarboxylase C13A11.06 (571 aa).

Pyruvate contacts are provided by D29 and H118. Thiamine diphosphate contacts are provided by residues T395 and 418-420; that span reads GSI. D450 lines the Mg(2+) pocket. Thiamine diphosphate contacts are provided by residues 451–452 and 477–482; these read GS and NDGYTI. N477 and G479 together coordinate Mg(2+). Pyruvate is bound at residue E483.

The protein belongs to the TPP enzyme family. Homotetramer. Mg(2+) serves as cofactor. Thiamine diphosphate is required as a cofactor.

The catalysed reaction is a 2-oxocarboxylate + H(+) = an aldehyde + CO2. It catalyses the reaction pyruvate + H(+) = acetaldehyde + CO2. The polypeptide is Putative pyruvate decarboxylase C13A11.06 (Schizosaccharomyces pombe (strain 972 / ATCC 24843) (Fission yeast)).